Here is a 234-residue protein sequence, read N- to C-terminus: Orotate phosphoribosyltransferase (234 aa).

Residue Lys-30 participates in 5-phospho-alpha-D-ribose 1-diphosphate binding. 38–39 (FF) is a binding site for orotate. Residues 80-81 (YK), Arg-110, Lys-111, Lys-114, His-116, and 136-144 (DDVITAGTA) contribute to the 5-phospho-alpha-D-ribose 1-diphosphate site. 2 residues coordinate orotate: Thr-140 and Arg-168.

This sequence belongs to the purine/pyrimidine phosphoribosyltransferase family. PyrE subfamily. Homodimer.

It catalyses the reaction orotidine 5'-phosphate + diphosphate = orotate + 5-phospho-alpha-D-ribose 1-diphosphate. The protein operates within pyrimidine metabolism; UMP biosynthesis via de novo pathway; UMP from orotate: step 1/2. In terms of biological role, catalyzes the transfer of a ribosyl phosphate group from 5-phosphoribose 1-diphosphate to orotate, leading to the formation of orotidine monophosphate (OMP). This chain is Orotate phosphoribosyltransferase (URA5), found in Metarhizium anisopliae (Entomophthora anisopliae).